We begin with the raw amino-acid sequence, 91 residues long: Insertion element IS1 7 protein InsA (91 aa).

The protein belongs to the IS1 elements InsA family.

In terms of biological role, absolutely required for transposition of IS1. The polypeptide is Insertion element IS1 7 protein InsA (insA7) (Escherichia coli (strain K12)).